The chain runs to 654 residues: Fructose-1,6-bisphosphatase class 3 (654 aa).

The disordered stretch occupies residues 288–307; the sequence is NPAFKPKKRPDKHERLTQRE. The span at 298–307 shows a compositional bias: basic and acidic residues; sequence DKHERLTQRE.

This sequence belongs to the FBPase class 3 family. Mn(2+) serves as cofactor.

The enzyme catalyses beta-D-fructose 1,6-bisphosphate + H2O = beta-D-fructose 6-phosphate + phosphate. The protein operates within carbohydrate biosynthesis; gluconeogenesis. The sequence is that of Fructose-1,6-bisphosphatase class 3 from Staphylococcus aureus (strain bovine RF122 / ET3-1).